The following is a 385-amino-acid chain: Serine/threonine-protein kinase H2 (385 aa).

Residues 63-320 (YDIKALIGTG…AGQALDHPWV (258 aa)) form the Protein kinase domain. ATP-binding positions include 69 to 77 (IGTGSFSRV) and K92. The interval 342–367 (QRASPHSQSPGSAQSSKSHYSHKSRH) is disordered. Low complexity predominate over residues 344 to 359 (ASPHSQSPGSAQSSKS).

The protein belongs to the protein kinase superfamily. CAMK Ser/Thr protein kinase family.

It catalyses the reaction L-seryl-[protein] + ATP = O-phospho-L-seryl-[protein] + ADP + H(+). It carries out the reaction L-threonyl-[protein] + ATP = O-phospho-L-threonyl-[protein] + ADP + H(+). The sequence is that of Serine/threonine-protein kinase H2 (PSKH2) from Homo sapiens (Human).